Reading from the N-terminus, the 222-residue chain is E3 ubiquitin-protein ligase RNF138 (222 aa).

The RING-type zinc finger occupies 17 to 57 (CPVCQEILQTPVRTQTCRHVFCRKCFMLAMKSGGAYCPLCR). The Zn(2+) site is built by C85, C88, H100, and C104. Residues 85–104 (CMYCGKMMKLHYMKLHYKSC) form a C2HC RNF-type zinc finger. C2H2-type zinc fingers lie at residues 134-157 (YKCP…NNVH) and 164-192 (MVCP…NARH). Residues 202 to 220 (INIDEEAQFQIAVANSYKI) enclose the UIM domain.

As to quaternary structure, interacts with nlk.2 (via C-terminus) and ube2k. Auto-ubiquitinated.

The protein resides in the chromosome. The catalysed reaction is S-ubiquitinyl-[E2 ubiquitin-conjugating enzyme]-L-cysteine + [acceptor protein]-L-lysine = [E2 ubiquitin-conjugating enzyme]-L-cysteine + N(6)-ubiquitinyl-[acceptor protein]-L-lysine.. It functions in the pathway protein modification; protein ubiquitination. E3 ubiquitin-protein ligase involved in DNA damage response by promoting DNA resection and homologous recombination. Recruited to sites of double-strand breaks following DNA damage and specifically promotes double-strand break repair via homologous recombination. Together with nlk.2, involved in the ubiquitination and degradation of TCF/LEF. Also exhibits auto-ubiquitination activity in combination with ube2k. May act as a negative regulator in the Wnt/beta-catenin-mediated signaling pathway. The sequence is that of E3 ubiquitin-protein ligase RNF138 (rnf138) from Xenopus laevis (African clawed frog).